The following is a 108-amino-acid chain: Cytochrome c6 (108 aa).

Residues 1–23 form the signal peptide; that stretch reads MRLLFAFFIICHIFTNNVQLTFA. 4 residues coordinate heme c: cysteine 37, cysteine 40, histidine 41, and methionine 81.

It belongs to the cytochrome c family. PetJ subfamily. In terms of assembly, monomer. In terms of processing, binds 1 heme c group covalently per subunit.

It is found in the plastid. It localises to the chloroplast thylakoid lumen. Functions as an electron carrier between membrane-bound cytochrome b6-f and photosystem I in oxygenic photosynthesis. This chain is Cytochrome c6, found in Gracilaria tenuistipitata var. liui (Red alga).